The following is a 671-amino-acid chain: Acetyl-coenzyme A synthetase (671 aa).

Positions 1–21 (MPTASASESSSNQPESSNASG) are disordered. Residues 221-224 (RRGK), Thr-339, and Asn-363 contribute to the CoA site. Residues 415 to 417 (GEG), 439 to 444 (DTWWQT), Asp-528, and Arg-543 contribute to the ATP site. Ser-551 contributes to the CoA binding site. Arg-554 contributes to the ATP binding site. Residues Val-565, His-567, and Val-570 each contribute to the Mg(2+) site. Arg-611 provides a ligand contact to CoA. Position 636 is an N6-acetyllysine (Lys-636).

This sequence belongs to the ATP-dependent AMP-binding enzyme family. Mg(2+) serves as cofactor. Acetylated. Deacetylation by the SIR2-homolog deacetylase activates the enzyme.

It catalyses the reaction acetate + ATP + CoA = acetyl-CoA + AMP + diphosphate. Catalyzes the conversion of acetate into acetyl-CoA (AcCoA), an essential intermediate at the junction of anabolic and catabolic pathways. AcsA undergoes a two-step reaction. In the first half reaction, AcsA combines acetate with ATP to form acetyl-adenylate (AcAMP) intermediate. In the second half reaction, it can then transfer the acetyl group from AcAMP to the sulfhydryl group of CoA, forming the product AcCoA. The chain is Acetyl-coenzyme A synthetase from Rhodopirellula baltica (strain DSM 10527 / NCIMB 13988 / SH1).